The primary structure comprises 164 residues: Small ribosomal subunit protein uS5 (164 aa).

Residues 10-73 form the S5 DRBM domain; it reads LEERVVAINR…EDAKKNLIEV (64 aa).

This sequence belongs to the universal ribosomal protein uS5 family. In terms of assembly, part of the 30S ribosomal subunit. Contacts proteins S4 and S8.

Its function is as follows. With S4 and S12 plays an important role in translational accuracy. Located at the back of the 30S subunit body where it stabilizes the conformation of the head with respect to the body. In Streptococcus gordonii (strain Challis / ATCC 35105 / BCRC 15272 / CH1 / DL1 / V288), this protein is Small ribosomal subunit protein uS5.